Reading from the N-terminus, the 148-residue chain is uncharacterized protein (148 aa).

2 consecutive transmembrane segments (helical) span residues 16–36 and 41–61; these read IVGA…SIIL and LSFS…AYIF.

It to M.jannaschii MJ0696.

It is found in the cell membrane. This is an uncharacterized protein from Methanocaldococcus jannaschii (strain ATCC 43067 / DSM 2661 / JAL-1 / JCM 10045 / NBRC 100440) (Methanococcus jannaschii).